A 336-amino-acid polypeptide reads, in one-letter code: tRNA N6-adenosine threonylcarbamoyltransferase (336 aa).

Fe cation contacts are provided by histidine 112 and histidine 116. Residues 136–140 (LVSGG), aspartate 169, glycine 182, and asparagine 276 contribute to the substrate site. Fe cation is bound at residue aspartate 304.

Belongs to the KAE1 / TsaD family. Fe(2+) serves as cofactor.

The protein resides in the cytoplasm. The catalysed reaction is L-threonylcarbamoyladenylate + adenosine(37) in tRNA = N(6)-L-threonylcarbamoyladenosine(37) in tRNA + AMP + H(+). Functionally, required for the formation of a threonylcarbamoyl group on adenosine at position 37 (t(6)A37) in tRNAs that read codons beginning with adenine. Is involved in the transfer of the threonylcarbamoyl moiety of threonylcarbamoyl-AMP (TC-AMP) to the N6 group of A37, together with TsaE and TsaB. TsaD likely plays a direct catalytic role in this reaction. The sequence is that of tRNA N6-adenosine threonylcarbamoyltransferase from Francisella philomiragia subsp. philomiragia (strain ATCC 25017 / CCUG 19701 / FSC 153 / O#319-036).